A 146-amino-acid chain; its full sequence is Snake venom vascular endothelial growth factor toxin (146 aa).

The first 24 residues, 1 to 24, serve as a signal peptide directing secretion; it reads MAAYLLAVAILFCIQGWPLGTVQG. Q25 is modified (pyrrolidone carboxylic acid). 3 cysteine pairs are disulfide-bonded: C38–C80, C69–C115, and C73–C117. Positions 118 to 146 are disordered; that stretch reads RPRSASGVNSRKHKRNPEEGEQRAKFPFV. Positions 133–146 are enriched in basic and acidic residues; sequence NPEEGEQRAKFPFV.

Belongs to the PDGF/VEGF growth factor family. Snake venom VEGF subfamily. Homodimer; disulfide-linked. Interacts with VEGF receptor-1 (FLT1) with a high affinity, whereas it binds to VEGF receptor-2 (KDR) with a low affinity. Does not bind VEGF receptor-3 (FLT4). As to expression, expressed by the venom gland.

It is found in the secreted. Functionally, snake venom VEGFs that may contribute to venom dispersion and prey subjugation by inducing vascular permeability and hypotension. This protein induces an increase in capillary permeability after intradermal injection, as well as a drastic hypotensive effect after intravenous injection. The hypotension is mediated by nitric oxide (NO), which is produced by VEGF-activated endothelium NO synthase. Also induces angiogenesis in vitro. Like other crotalid VEGFs, this protein interacts with VEGF receptor-1 (FLT1) with a high affinity, whereas it binds to VEGF receptor-2 (KDR) with a low affinity. The sequence is that of Snake venom vascular endothelial growth factor toxin from Bothrops erythromelas (Caatinga lance head).